The following is a 428-amino-acid chain: 3-phosphoshikimate 1-carboxyvinyltransferase (428 aa).

3-phosphoshikimate-binding residues include K19, S20, and R24. A phosphoenolpyruvate-binding site is contributed by K19. 2 residues coordinate phosphoenolpyruvate: G91 and R119. Residues S164, Q166, D312, and K339 each contribute to the 3-phosphoshikimate site. Phosphoenolpyruvate is bound at residue Q166. The active-site Proton acceptor is the D312. 2 residues coordinate phosphoenolpyruvate: R343 and R386.

The protein belongs to the EPSP synthase family. Monomer.

Its subcellular location is the cytoplasm. It catalyses the reaction 3-phosphoshikimate + phosphoenolpyruvate = 5-O-(1-carboxyvinyl)-3-phosphoshikimate + phosphate. Its pathway is metabolic intermediate biosynthesis; chorismate biosynthesis; chorismate from D-erythrose 4-phosphate and phosphoenolpyruvate: step 6/7. Catalyzes the transfer of the enolpyruvyl moiety of phosphoenolpyruvate (PEP) to the 5-hydroxyl of shikimate-3-phosphate (S3P) to produce enolpyruvyl shikimate-3-phosphate and inorganic phosphate. This is 3-phosphoshikimate 1-carboxyvinyltransferase from Bacillus subtilis (strain 168).